The primary structure comprises 171 residues: MVILGIDPGSRITGFGVIKVQDNKIYYVASGCIQITEITTPKRLKQIADGITQIINIYAPTEAAIEQIFMFQNPMGAIKLGQARGVAMCTLAINNLEVSEYSAKQIKQAVVGTGGAAKSQVQHMVQSLLGLSKKPPEDAADALAIAICHYHSSKSLAKISGASRVSQKRIK.

Residues aspartate 7, glutamate 66, and aspartate 138 contribute to the active site. Positions 7, 66, and 138 each coordinate Mg(2+).

This sequence belongs to the RuvC family. As to quaternary structure, homodimer which binds Holliday junction (HJ) DNA. The HJ becomes 2-fold symmetrical on binding to RuvC with unstacked arms; it has a different conformation from HJ DNA in complex with RuvA. In the full resolvosome a probable DNA-RuvA(4)-RuvB(12)-RuvC(2) complex forms which resolves the HJ. Mg(2+) is required as a cofactor.

It is found in the cytoplasm. It catalyses the reaction Endonucleolytic cleavage at a junction such as a reciprocal single-stranded crossover between two homologous DNA duplexes (Holliday junction).. Its function is as follows. The RuvA-RuvB-RuvC complex processes Holliday junction (HJ) DNA during genetic recombination and DNA repair. Endonuclease that resolves HJ intermediates. Cleaves cruciform DNA by making single-stranded nicks across the HJ at symmetrical positions within the homologous arms, yielding a 5'-phosphate and a 3'-hydroxyl group; requires a central core of homology in the junction. The consensus cleavage sequence is 5'-(A/T)TT(C/G)-3'. Cleavage occurs on the 3'-side of the TT dinucleotide at the point of strand exchange. HJ branch migration catalyzed by RuvA-RuvB allows RuvC to scan DNA until it finds its consensus sequence, where it cleaves and resolves the cruciform DNA. The polypeptide is Crossover junction endodeoxyribonuclease RuvC (Francisella tularensis subsp. holarctica (strain FTNF002-00 / FTA)).